A 24-amino-acid chain; its full sequence is Chaperonin GroEL (24 aa).

The protein belongs to the chaperonin (HSP60) family. As to quaternary structure, forms a cylinder of 14 subunits composed of two heptameric rings stacked back-to-back. Interacts with the co-chaperonin GroES.

The protein resides in the cytoplasm. It carries out the reaction ATP + H2O + a folded polypeptide = ADP + phosphate + an unfolded polypeptide.. Its function is as follows. Together with its co-chaperonin GroES, plays an essential role in assisting protein folding. The GroEL-GroES system forms a nano-cage that allows encapsulation of the non-native substrate proteins and provides a physical environment optimized to promote and accelerate protein folding. The protein is Chaperonin GroEL of Acinetobacter calcoaceticus.